The primary structure comprises 414 residues: Esterase FrsA (414 aa).

The protein belongs to the FrsA family.

It catalyses the reaction a carboxylic ester + H2O = an alcohol + a carboxylate + H(+). Catalyzes the hydrolysis of esters. The chain is Esterase FrsA from Escherichia coli O17:K52:H18 (strain UMN026 / ExPEC).